The sequence spans 260 residues: Coiled-coil domain-containing protein 127 (260 aa).

Residues 49–135 (QKEVEKEREA…QVMQEKRQVQ (87 aa)) are a coiled coil.

This Homo sapiens (Human) protein is Coiled-coil domain-containing protein 127 (CCDC127).